The sequence spans 235 residues: Fibrillarin-like rRNA/tRNA 2'-O-methyltransferase (235 aa).

S-adenosyl-L-methionine contacts are provided by residues 91-92, 110-111, 137-138, and 157-160; these read TT, EF, DA, and DVAQ.

The protein belongs to the methyltransferase superfamily. Fibrillarin family. As to quaternary structure, interacts with nop5. Component of box C/D small ribonucleoprotein (sRNP) particles that contain rpl7ae, FlpA and nop5, plus a guide RNA.

Involved in pre-rRNA and tRNA processing. Utilizes the methyl donor S-adenosyl-L-methionine to catalyze the site-specific 2'-hydroxyl methylation of ribose moieties in rRNA and tRNA. Site specificity is provided by a guide RNA that base pairs with the substrate. Methylation occurs at a characteristic distance from the sequence involved in base pairing with the guide RNA. The chain is Fibrillarin-like rRNA/tRNA 2'-O-methyltransferase from Pyrobaculum aerophilum (strain ATCC 51768 / DSM 7523 / JCM 9630 / CIP 104966 / NBRC 100827 / IM2).